Here is a 61-residue protein sequence, read N- to C-terminus: Large ribosomal subunit protein uL30 (61 aa).

It belongs to the universal ribosomal protein uL30 family. Part of the 50S ribosomal subunit.

This Chromohalobacter salexigens (strain ATCC BAA-138 / DSM 3043 / CIP 106854 / NCIMB 13768 / 1H11) protein is Large ribosomal subunit protein uL30.